The following is a 565-amino-acid chain: CTP synthase (565 aa).

The interval methionine 1–leucine 272 is amidoligase domain. Serine 18 serves as a coordination point for CTP. A UTP-binding site is contributed by serine 18. Serine 19–isoleucine 24 is an ATP binding site. L-glutamine is bound at residue tyrosine 59. An ATP-binding site is contributed by aspartate 76. Positions 76 and 146 each coordinate Mg(2+). Residues aspartate 153–glutamate 155, lysine 193–glutamine 198, and lysine 229 contribute to the CTP site. UTP contacts are provided by residues lysine 193–glutamine 198 and lysine 229. The 245-residue stretch at threonine 299–glycine 543 folds into the Glutamine amidotransferase type-1 domain. Glycine 363 contacts L-glutamine. The active-site Nucleophile; for glutamine hydrolysis is cysteine 390. Residues leucine 391–glutamine 394, glutamate 414, and arginine 471 contribute to the L-glutamine site. Residues histidine 516 and glutamate 518 contribute to the active site.

The protein belongs to the CTP synthase family. As to quaternary structure, homotetramer.

The enzyme catalyses UTP + L-glutamine + ATP + H2O = CTP + L-glutamate + ADP + phosphate + 2 H(+). It carries out the reaction L-glutamine + H2O = L-glutamate + NH4(+). The catalysed reaction is UTP + NH4(+) + ATP = CTP + ADP + phosphate + 2 H(+). It participates in pyrimidine metabolism; CTP biosynthesis via de novo pathway; CTP from UDP: step 2/2. Its activity is regulated as follows. Allosterically activated by GTP, when glutamine is the substrate; GTP has no effect on the reaction when ammonia is the substrate. The allosteric effector GTP functions by stabilizing the protein conformation that binds the tetrahedral intermediate(s) formed during glutamine hydrolysis. Inhibited by the product CTP, via allosteric rather than competitive inhibition. Catalyzes the ATP-dependent amination of UTP to CTP with either L-glutamine or ammonia as the source of nitrogen. Regulates intracellular CTP levels through interactions with the four ribonucleotide triphosphates. The sequence is that of CTP synthase from Pelodictyon phaeoclathratiforme (strain DSM 5477 / BU-1).